A 230-amino-acid chain; its full sequence is Sugar fermentation stimulation protein homolog (230 aa).

This sequence belongs to the SfsA family.

This is Sugar fermentation stimulation protein homolog from Clostridium tetani (strain Massachusetts / E88).